Here is a 492-residue protein sequence, read N- to C-terminus: SH2 domain-containing adapter protein E (492 aa).

Disordered regions lie at residues 46–193 (TASE…DKAK), 214–236 (KRTK…EPYD), 260–332 (LDGP…EQPW), and 347–384 (FEGS…KVDP). At Ser-103 the chain carries Phosphoserine. Residues 149 to 158 (IKVDTQEKNG) are compositionally biased toward basic and acidic residues. The segment covering 168–184 (TSSSSSSSSSASSSPSS) has biased composition (low complexity). Composition is skewed to basic and acidic residues over residues 214-227 (KRTK…RVGE), 268-285 (ETVK…KDLL), 306-332 (AEVK…EQPW), 349-361 (GSDR…DAGR), and 373-383 (LSDHGDGEKVD). The 96-residue stretch at 393 to 488 (WYHGSISRAE…AEHMTLLHPV (96 aa)) folds into the SH2 domain.

In terms of tissue distribution, expressed in heart, brain, lung and skeletal muscle.

This Mus musculus (Mouse) protein is SH2 domain-containing adapter protein E (She).